The primary structure comprises 194 residues: Putative lipoprotein LppK (194 aa).

The first 26 residues, 1–26 (MSRWTHRTFFIALSAIVTTAGFGSSG), serve as a signal peptide directing secretion. A lipid anchor (N-palmitoyl cysteine) is attached at C27. Residue C27 is the site of S-diacylglycerol cysteine attachment. The interval 174 to 194 (GNSSGLTNPAPIKAPTPTPSH) is disordered. Positions 185–194 (IKAPTPTPSH) are enriched in pro residues.

This sequence belongs to the MTB12 family.

The protein resides in the cell membrane. The protein is Putative lipoprotein LppK (lppK) of Mycobacterium leprae (strain TN).